The following is a 187-amino-acid chain: UPF0301 protein SG2023 (187 aa).

The protein belongs to the UPF0301 (AlgH) family.

In Sodalis glossinidius (strain morsitans), this protein is UPF0301 protein SG2023.